The primary structure comprises 1220 residues: Plasma membrane calcium-transporting ATPase 3 (1220 aa).

Residues 1–20 are compositionally biased toward polar residues; it reads MGDMANSSIEFHPKPQQQRD. Residues 1–23 form a disordered region; sequence MGDMANSSIEFHPKPQQQRDVPQ. The Cytoplasmic portion of the chain corresponds to 1 to 97; it reads MGDMANSSIE…NFIPPKQPKT (97 aa). Ser8 carries the phosphoserine modification. The helical transmembrane segment at 98-118 threads the bilayer; it reads FLQLVWEALQDVTLIILEVAA. Over 119–155 the chain is Extracellular; the sequence is IVSLGLSFYAPPGEESEACGNVSGGAEDEGEAEAGWI. The helical transmembrane segment at 156-176 threads the bilayer; sequence EGAAILLSVICVVLVTAFNDW. Topologically, residues 177–364 are cytoplasmic; that stretch reads SKEKQFRGLQ…KEKSVLQGKL (188 aa). The tract at residues 298-355 is disordered; sequence EEEKKDKKGKQQDGAMESSQTKAKKQDGAVAMEMQPLKSAEGGEMEEREKKKANAPKK. Composition is skewed to basic and acidic residues over residues 299 to 308 and 342 to 355; these read EEKKDKKGKQ and MEER…APKK. A helical membrane pass occupies residues 365-384; the sequence is TKLAVQIGKAGLVMSAITVI. Topologically, residues 385–417 are extracellular; that stretch reads ILVLYFVIETFVVEGRTWLAECTPVYVQYFVKF. A helical membrane pass occupies residues 418–435; that stretch reads FIIGVTVLVVAVPEGLPL. Residues 436–849 lie on the Cytoplasmic side of the membrane; it reads AVTISLAYSV…MWGRNVYDSI (414 aa). Residue Asp473 is the 4-aspartylphosphate intermediate of the active site. Positions 794 and 798 each coordinate Mg(2+). Residues 850–869 traverse the membrane as a helical segment; that stretch reads SKFLQFQLTVNVVAVIVAFT. Residues 870–879 are Extracellular-facing; sequence GACITQDSPL. Residues 880–900 form a helical membrane-spanning segment; sequence KAVQMLWVNLIMDTFASLALA. Residues 901-920 lie on the Cytoplasmic side of the membrane; that stretch reads TEPPTESLLLRKPYGRDKPL. The helical transmembrane segment at 921 to 943 threads the bilayer; the sequence is ISRTMMKNILGHAVYQLAIIFTL. Residues 944 to 961 are Extracellular-facing; it reads LFVGELFFDIDSGRNAPL. The helical transmembrane segment at 962 to 983 threads the bilayer; sequence HSPPSEHYTIIFNTFVMMQLFN. The Cytoplasmic portion of the chain corresponds to 984–1002; it reads EINARKIHGERNVFDGIFS. Residues 1003-1024 form a helical membrane-spanning segment; it reads NPIFCTIVLGTFGIQIVIVQFG. The Extracellular segment spans residues 1025–1034; sequence GKPFSCSPLS. Residues 1035-1056 form a helical membrane-spanning segment; sequence TEQWLWCLFVGVGELVWGQVIA. Residues 1057-1220 are Cytoplasmic-facing; sequence TIPTSQLKCL…SPLHSVETSL (164 aa). At Thr1079 the chain carries Phosphothreonine. A calmodulin-binding subdomain A region spans residues 1097 to 1114; the sequence is LRRGQILWFRGLNRIQTQ. The residue at position 1113 (Thr1113) is a Phosphothreonine; by PKC. The segment at 1115-1124 is calmodulin-binding subdomain B; that stretch reads IRVVKAFRSS. Residues 1166–1186 are disordered; sequence ENEERLRAPPPPSPNQNNNAI.

Belongs to the cation transport ATPase (P-type) (TC 3.A.3) family. Type IIB subfamily. As to quaternary structure, interacts with PDZD11. Interacts (via N-terminus) with YWHAE. As to expression, highly expressed in the cerebellum. Expressed in adrenal glands.

It is found in the cell membrane. The protein localises to the presynaptic cell membrane. The enzyme catalyses Ca(2+)(in) + ATP + H2O = Ca(2+)(out) + ADP + phosphate + H(+). Down-regulated by YWHAE. ATP-driven Ca(2+) ion pump involved in the maintenance of basal intracellular Ca(2+) levels at the presynaptic terminals. Uses ATP as an energy source to transport cytosolic Ca(2+) ions across the plasma membrane to the extracellular compartment. May counter-transport protons, but the mechanism and the stoichiometry of this Ca(2+)/H(+) exchange remains to be established. The protein is Plasma membrane calcium-transporting ATPase 3 of Homo sapiens (Human).